The following is a 79-amino-acid chain: Hematopoietic cell signal transducer (79 aa).

Residues 1–18 (MVPPGNILFLLLLPVATA) form the signal peptide. Residues 19–35 (QMTPGSCSGCGPLSLPL) are Extracellular-facing. Residues 36 to 56 (LAGLVAADAVVSLLIVVVVFV) traverse the membrane as a helical segment. Residues 57 to 79 (CARLRSRPTQEDDKIYINMPGRG) are Cytoplasmic-facing. The residue at position 72 (Tyr-72) is a Phosphotyrosine. A GRB2 binding site region spans residues 72 to 74 (YIN). Residues 72 to 75 (YINM) are PIK3R1 binding site.

This sequence belongs to the DAP10 family. As to quaternary structure, homodimer; Disulfide-linked. Heterohexamer composed of four subunits of HCST/DAP10 and two subunits of KLRK1. Interacts (via transmembrane domain) with KLRK1 (via transmembrane domain); the interaction is required for KLRK1 NK cell surface and induces NK cell-mediated cytotoxicity. Interacts with PIK3R1 and GRB2. Interacts with CLEC5A. Forms an CLEC5A/TYROBP/HCST trimolecular complex depending almost solely on TYROBP. Interacts with KLRK1. Interacts with CD300H. Post-translationally, phosphorylated; PIK3R1 and GRB2 associate specifically with tyrosine-phosphorylated HCST. In terms of processing, O-glycosylated.

It localises to the membrane. Transmembrane adapter protein which associates with KLRK1 to form an activation receptor KLRK1-HCST in lymphoid and myeloid cells; this receptor plays a major role in triggering cytotoxicity against target cells expressing cell surface ligands such as MHC class I chain-related MICA and MICB, and UL16-binding proteins (ULBPs); these ligands are up-regulated by stress conditions and pathological state such as viral infection and tumor transformation. Functions as a docking site for PI3-kinase PIK3R1 and GRB2. Interaction of ULBPs with KLRK1-HCST triggers calcium mobilization and activation of the PIK3R1, MAP2K/ERK, and JAK2/STAT5 signaling pathways. Both PIK3R1 and GRB2 are required for full KLRK1-HCST-mediated activation and ultimate killing of target cells. In NK cells, KLRK1-HCST signaling directly induces cytotoxicity and enhances cytokine production initiated via DAP12/TYROBP-associated receptors. In T-cells, it provides primarily costimulation for TCR-induced signals. KLRK1-HCST receptor plays a role in immune surveillance against tumors and is required for cytolysis of tumors cells; indeed, melanoma cells that do not express KLRK1 ligands escape from immune surveillance mediated by NK cells. The protein is Hematopoietic cell signal transducer (HCST) of Bos taurus (Bovine).